Reading from the N-terminus, the 301-residue chain is MTEDELNKLLLAGKIAAKARDEVSLDVKASAKVLDICEEVESIIIENKAFPSFPCNISINSEAAHYSPTINDEKRIPEGAVVKLDLGAHIDGFISDTAITISLDSRYQRLLDASKTALEAAITNFKAGLSIGEIGRVIEKVIRAQGYKPIRNLGGHLIRRYELHAGVFIPNVYERGLGVIQSDSVYAIEPFATDGGGEVVEGKSITIYSLKNPNIKGLSSRENELIDFIYTRFNYLPFSERWLKEFSTNVDELRNNIKNLVKKGALRGYPILIEIKKGVVSQFEHTVIVKGDSIIVSTKSL.

His65 is a substrate binding site. Residues Asp85, Asp96, and His156 each coordinate a divalent metal cation. His164 provides a ligand contact to substrate. Glu189 and Glu284 together coordinate a divalent metal cation.

Belongs to the peptidase M24A family. Methionine aminopeptidase archaeal type 2 subfamily. As to quaternary structure, monomer. The cofactor is Co(2+). Requires Zn(2+) as cofactor. Mn(2+) serves as cofactor. Fe(2+) is required as a cofactor.

It carries out the reaction Release of N-terminal amino acids, preferentially methionine, from peptides and arylamides.. Removes the N-terminal methionine from nascent proteins. The N-terminal methionine is often cleaved when the second residue in the primary sequence is small and uncharged (Met-Ala-, Cys, Gly, Pro, Ser, Thr, or Val). The sequence is that of Methionine aminopeptidase from Saccharolobus solfataricus (strain ATCC 35092 / DSM 1617 / JCM 11322 / P2) (Sulfolobus solfataricus).